The following is a 256-amino-acid chain: Homeobox protein goosecoid (256 aa).

The homeobox DNA-binding region spans 160–219 (KRRHRTIFTDEQLEALENLFQETKYPDVGTREQLARKVHLREEKVEVWFKNRRAKWRRQK). A disordered region spans residues 213–256 (AKWRRQKRSSSEESENAEKWNKTSSKASPEKREEEGKSDLDSDS). Over residues 240–256 (SPEKREEEGKSDLDSDS) the composition is skewed to basic and acidic residues.

It belongs to the paired homeobox family. Bicoid subfamily. As to expression, in early gastrulation, expressed in the dorsal lip. In later stages of development found in head, limbs and body wall. In the embryo, expressed in the postotic cranial neural crest cells, the frontonasal prominence, the first branchial arch and cleft, and specific regions of large joints.

The protein resides in the nucleus. In terms of biological role, regulates chordin (CHRD). May play a role in spatial programing within discrete embryonic fields or lineage compartments during organogenesis. In concert with NKX3-2, plays a role in defining the structural components of the middle ear; required for the development of the entire tympanic ring. Goosecoid-expressing regions of the gastrulating mouse egg cylinder have organizer-like activity when transplanted into Xenopus embryos. Probably involved in the regulatory networks that define neural crest cell fate specification and determine mesoderm cell lineages in mammals. The protein is Homeobox protein goosecoid (Gsc) of Mus musculus (Mouse).